Here is a 185-residue protein sequence, read N- to C-terminus: Ribosome-recycling factor (185 aa).

Belongs to the RRF family.

Its subcellular location is the cytoplasm. Functionally, responsible for the release of ribosomes from messenger RNA at the termination of protein biosynthesis. May increase the efficiency of translation by recycling ribosomes from one round of translation to another. The protein is Ribosome-recycling factor of Alcanivorax borkumensis (strain ATCC 700651 / DSM 11573 / NCIMB 13689 / SK2).